The following is a 384-amino-acid chain: Ceramide very long chain fatty acid hydroxylase SCS7 (384 aa).

The Cytoplasmic portion of the chain corresponds to M1–A197. One can recognise a Cytochrome b5 heme-binding domain in the interval L9–A90. Residues H45 and H72 each contribute to the heme site. A helical transmembrane segment spans residues W198–A216. The Lumenal portion of the chain corresponds to L217–N221. The chain crosses the membrane as a helical span at residues Q222–F246. Zn(2+) contacts are provided by H244, H249, H268, H271, and H272. The Cytoplasmic segment spans residues L247–P284. A helical transmembrane segment spans residues P285 to L302. At L303–P304 the chain is on the lumenal side. Residues L305–F328 traverse the membrane as a helical segment. Zn(2+) is bound by residues H326, H330, H345, H348, and H349. The Cytoplasmic segment spans residues L329–E384.

It belongs to the sterol desaturase family. SCS7 subfamily. It depends on Zn(2+) as a cofactor.

Its subcellular location is the endoplasmic reticulum membrane. It carries out the reaction an N-(1,2 saturated acyl)-(4R)-hydroxysphinganine + 2 Fe(II)-[cytochrome b5] + O2 + 2 H(+) = an N-(2R-hydroxyacyl)-4R-hydroxysphinganine + 2 Fe(III)-[cytochrome b5] + H2O. It catalyses the reaction an N-(1,2-saturated acyl)sphinganine + 2 Fe(II)-[cytochrome b5] + O2 + 2 H(+) = an N-[(2'R)-hydroxyacyl]sphinganine + 2 Fe(III)-[cytochrome b5] + H2O. The catalysed reaction is N-hexacosanoyl-(4R)-hydroxysphinganine + 2 Fe(II)-[cytochrome b5] + O2 + 2 H(+) = N-(2-hydroxyhexacosanyl)-(4R)-hydroxysphinganine + 2 Fe(III)-[cytochrome b5] + H2O. It participates in sphingolipid metabolism. Functionally, ceramide hydroxylase involved in the hydroxylation of sphingolipid-associated very long chain fatty acids. Postulated to hydroxylate the very long chain fatty acid of dihydroceramides and phytoceramides at C-2. The polypeptide is Ceramide very long chain fatty acid hydroxylase SCS7 (Saccharomyces cerevisiae (strain ATCC 204508 / S288c) (Baker's yeast)).